A 349-amino-acid chain; its full sequence is Hydroxymethylglutaryl-CoA synthase (349 aa).

Residue aspartate 29 coordinates (3S)-3-hydroxy-3-methylglutaryl-CoA. The active-site Proton donor/acceptor is the glutamate 81. Positions 113, 154, 202, and 235 each coordinate (3S)-3-hydroxy-3-methylglutaryl-CoA. The Acyl-thioester intermediate role is filled by cysteine 113. Catalysis depends on histidine 235, which acts as the Proton donor/acceptor. Arginine 240 serves as a coordination point for CoA. (3S)-3-hydroxy-3-methylglutaryl-CoA is bound by residues arginine 244, asparagine 267, and serine 297.

This sequence belongs to the thiolase-like superfamily. Archaeal HMG-CoA synthase family. In terms of assembly, interacts with acetoacetyl-CoA thiolase that catalyzes the precedent step in the pathway and with a DUF35 protein. The acetoacetyl-CoA thiolase/HMG-CoA synthase complex channels the intermediate via a fused CoA-binding site, which allows for efficient coupling of the endergonic thiolase reaction with the exergonic HMGCS reaction.

The enzyme catalyses acetoacetyl-CoA + acetyl-CoA + H2O = (3S)-3-hydroxy-3-methylglutaryl-CoA + CoA + H(+). Its pathway is metabolic intermediate biosynthesis; (R)-mevalonate biosynthesis; (R)-mevalonate from acetyl-CoA: step 2/3. Functionally, catalyzes the condensation of acetyl-CoA with acetoacetyl-CoA to form 3-hydroxy-3-methylglutaryl-CoA (HMG-CoA). Functions in the mevalonate (MVA) pathway leading to isopentenyl diphosphate (IPP), a key precursor for the biosynthesis of isoprenoid compounds that are building blocks of archaeal membrane lipids. This chain is Hydroxymethylglutaryl-CoA synthase, found in Pyrobaculum arsenaticum (strain DSM 13514 / JCM 11321 / PZ6).